A 121-amino-acid chain; its full sequence is uncharacterized protein (121 aa).

Positions 1 to 19 (MKKFALATIFALATTSAFA) are cleaved as a signal peptide.

The protein to E.coli YgiW.

The protein resides in the periplasm. This is an uncharacterized protein from Haemophilus influenzae (strain ATCC 51907 / DSM 11121 / KW20 / Rd).